A 266-amino-acid chain; its full sequence is Small ribosomal subunit protein uS3 (266 aa).

The region spanning 39-107 is the KH type-2 domain; it reads VREYLKKKLK…PVHVNIEEIR (69 aa). The interval 218–266 is disordered; the sequence is EVAEDKRPRRNARPGDRRPRRDGEGGAPGARRGAPRRGAGKPEDGKTGE. Composition is skewed to basic and acidic residues over residues 230-241 and 257-266; these read RPGDRRPRRDGE and GKPEDGKTGE.

It belongs to the universal ribosomal protein uS3 family. Part of the 30S ribosomal subunit. Forms a tight complex with proteins S10 and S14.

Its function is as follows. Binds the lower part of the 30S subunit head. Binds mRNA in the 70S ribosome, positioning it for translation. The chain is Small ribosomal subunit protein uS3 from Burkholderia multivorans (strain ATCC 17616 / 249).